The chain runs to 1841 residues: Sucrase-isomaltase, intestinal (1841 aa).

Residues 1–12 are Cytoplasmic-facing; it reads MAKKKFSALEIS. A Phosphoserine; by PKA modification is found at S7. The helical; Signal-anchor for type II membrane protein transmembrane segment at 13-32 threads the bilayer; sequence LIVLFIIVTAIAIALVTVLA. The Lumenal segment spans residues 33 to 1841; it reads TKVPAVEEIK…LDEPIQITWS (1809 aa). Residues 42-81 are disordered; the sequence is KSPTPTSNSTPTSTPTSTSTPTSTSTPSPGKCPPEQGEPI. Residues 43–70 are compositionally biased toward low complexity; sequence SPTPTSNSTPTSTPTSTSTPTSTSTPSP. Residues 71–120 enclose the P-type 1 domain; the sequence is GKCPPEQGEPINERINCIPEQHPTKAICEERGCCWRPWNNTVIPWCFFAD. Disulfide bonds link C73–C104, C87–C103, and C98–C116. N-linked (GlcNAc...) asparagine glycosylation is present at N109. The tract at residues 120–1013 is isomaltase; sequence DNHGYNAESI…ELQLNPPNAR (894 aa). Residues D274 and D398 each contribute to the substrate site. Y401 and Y410 each carry sulfotyrosine. N-linked (GlcNAc...) asparagine glycosylation is present at N464. The active-site Nucleophile; for isomaltase activity is D514. R599 provides a ligand contact to substrate. D615 functions as the For isomaltase activity in the catalytic mechanism. C646 and C657 form a disulfide bridge. H673 lines the substrate pocket. 4 N-linked (GlcNAc...) asparagine glycosylation sites follow: N758, N765, N867, and N910. Residues 936-984 form the P-type 2 domain; the sequence is RWCRTFSDNEKFTCYPDVGTATEGTCTQRGCLWQPVSGLSNVPPYYFPP. The interval 1014–1841 is sucrase; that stretch reads IKLPSNPIST…LDEPIQITWS (828 aa). N-linked (GlcNAc...) asparagine glycans are attached at residues N1240, N1308, N1345, N1359, and N1373. Y1387 is modified (sulfotyrosine). D1399 functions as the Nucleophile; for sucrase activity in the catalytic mechanism. E1402 (for sucrase activity) is an active-site residue. N1485 carries N-linked (GlcNAc...) asparagine glycosylation. The Proton donor; for sucrase activity role is filled by D1512. Residues N1513, N1575, N1762, and N1829 are each glycosylated (N-linked (GlcNAc...) asparagine).

This sequence belongs to the glycosyl hydrolase 31 family. In terms of assembly, the resulting sucrase and isomaltase subunits stay associated with one another in a complex by non-covalent linkages. The precursor is proteolytically cleaved when exposed to pancreatic proteases in the intestinal lumen. Post-translationally, sulfated.

The protein resides in the apical cell membrane. The enzyme catalyses Hydrolysis of sucrose and maltose by an alpha-D-glucosidase-type action.. The catalysed reaction is Hydrolysis of (1-&gt;6)-alpha-D-glucosidic linkages in some oligosaccharides produced from starch and glycogen by alpha-amylase, and in isomaltose.. Its function is as follows. Plays an important role in the final stage of carbohydrate digestion. Isomaltase activity is specific for both alpha-1,4- and alpha-1,6-oligosaccharides. The polypeptide is Sucrase-isomaltase, intestinal (Si) (Rattus norvegicus (Rat)).